The sequence spans 251 residues: 1-(5-phosphoribosyl)-5-[(5-phosphoribosylamino)methylideneamino] imidazole-4-carboxamide isomerase (251 aa).

Aspartate 8 acts as the Proton acceptor in catalysis. Aspartate 131 functions as the Proton donor in the catalytic mechanism.

It belongs to the HisA/HisF family.

It localises to the cytoplasm. The catalysed reaction is 1-(5-phospho-beta-D-ribosyl)-5-[(5-phospho-beta-D-ribosylamino)methylideneamino]imidazole-4-carboxamide = 5-[(5-phospho-1-deoxy-D-ribulos-1-ylimino)methylamino]-1-(5-phospho-beta-D-ribosyl)imidazole-4-carboxamide. It functions in the pathway amino-acid biosynthesis; L-histidine biosynthesis; L-histidine from 5-phospho-alpha-D-ribose 1-diphosphate: step 4/9. The protein is 1-(5-phosphoribosyl)-5-[(5-phosphoribosylamino)methylideneamino] imidazole-4-carboxamide isomerase of Burkholderia ambifaria (strain MC40-6).